Reading from the N-terminus, the 96-residue chain is UPF0235 protein YggU (96 aa).

This sequence belongs to the UPF0235 family.

The polypeptide is UPF0235 protein YggU (Salmonella newport (strain SL254)).